The following is a 610-amino-acid chain: ATP-dependent zinc metalloprotease FtsH (610 aa).

Residues 1 to 3 (MAK) are Cytoplasmic-facing. Residues 4–24 (NLMLWLVIAVVLMSIFQNFSA) traverse the membrane as a helical segment. At 25–97 (NNINNRKIDY…IIGAAPEEQS (73 aa)) the chain is on the extracellular side. A helical membrane pass occupies residues 98-118 (FFTAIFISWFPMLLLIGVWVF). Topologically, residues 119–610 (FMRQMQVGGG…SNICTDDDNN (492 aa)) are cytoplasmic. Position 192–199 (192–199 (GPPGTGKT)) interacts with ATP. Histidine 414 is a binding site for Zn(2+). The active site involves glutamate 415. Zn(2+)-binding residues include histidine 418 and aspartate 492.

This sequence in the central section; belongs to the AAA ATPase family. It in the C-terminal section; belongs to the peptidase M41 family. In terms of assembly, homohexamer. Zn(2+) is required as a cofactor.

The protein resides in the cell membrane. Acts as a processive, ATP-dependent zinc metallopeptidase for both cytoplasmic and membrane proteins. Plays a role in the quality control of integral membrane proteins. This Buchnera aphidicola subsp. Baizongia pistaciae (strain Bp) protein is ATP-dependent zinc metalloprotease FtsH.